The sequence spans 259 residues: uncharacterized protein (259 aa).

The 159-residue stretch at 1–159 (MIEQFFRPDS…TEIIIKDPYR (159 aa)) folds into the FAD-binding PCMH-type domain.

This is an uncharacterized protein from Escherichia coli O157:H7.